We begin with the raw amino-acid sequence, 394 residues long: Elongation factor Tu (394 aa).

The tr-type G domain occupies 10–204; sequence KPHVNVGTIG…ALDSYIPEPE (195 aa). The interval 19-26 is G1; the sequence is GHVDHGKT. Residue 19-26 coordinates GTP; the sequence is GHVDHGKT. Residue Thr-26 coordinates Mg(2+). Residues 60–64 are G2; that stretch reads GITIN. Residues 81-84 are G3; sequence DCPG. GTP-binding positions include 81-85 and 136-139; these read DCPGH and NKCD. A G4 region spans residues 136–139; that stretch reads NKCD. Residues 174–176 form a G5 region; sequence SAL.

Belongs to the TRAFAC class translation factor GTPase superfamily. Classic translation factor GTPase family. EF-Tu/EF-1A subfamily. As to quaternary structure, monomer.

It localises to the cytoplasm. The catalysed reaction is GTP + H2O = GDP + phosphate + H(+). Functionally, GTP hydrolase that promotes the GTP-dependent binding of aminoacyl-tRNA to the A-site of ribosomes during protein biosynthesis. The polypeptide is Elongation factor Tu (Shewanella sp. (strain ANA-3)).